The following is a 247-amino-acid chain: Carboxy-S-adenosyl-L-methionine synthase (247 aa).

Residues Y39, 64–66, 89–90, 117–118, N132, and R199 contribute to the S-adenosyl-L-methionine site; these read GCS, DN, and DI.

It belongs to the class I-like SAM-binding methyltransferase superfamily. Cx-SAM synthase family. As to quaternary structure, homodimer.

The catalysed reaction is prephenate + S-adenosyl-L-methionine = carboxy-S-adenosyl-L-methionine + 3-phenylpyruvate + H2O. Functionally, catalyzes the conversion of S-adenosyl-L-methionine (SAM) to carboxy-S-adenosyl-L-methionine (Cx-SAM). The sequence is that of Carboxy-S-adenosyl-L-methionine synthase from Escherichia coli (strain K12 / MC4100 / BW2952).